A 399-amino-acid chain; its full sequence is 1-deoxy-D-xylulose 5-phosphate reductoisomerase (399 aa).

NADPH-binding residues include Thr13, Gly14, Ser15, Ile16, and Asn127. Lys128 provides a ligand contact to 1-deoxy-D-xylulose 5-phosphate. NADPH is bound at residue Glu129. Asp153 contacts Mn(2+). Ser154, Glu155, Ser187, and His210 together coordinate 1-deoxy-D-xylulose 5-phosphate. A Mn(2+)-binding site is contributed by Glu155. Gly216 provides a ligand contact to NADPH. Ser223, Asn228, Lys229, and Glu232 together coordinate 1-deoxy-D-xylulose 5-phosphate. Residue Glu232 participates in Mn(2+) binding.

Belongs to the DXR family. Mg(2+) serves as cofactor. Requires Mn(2+) as cofactor.

The catalysed reaction is 2-C-methyl-D-erythritol 4-phosphate + NADP(+) = 1-deoxy-D-xylulose 5-phosphate + NADPH + H(+). The protein operates within isoprenoid biosynthesis; isopentenyl diphosphate biosynthesis via DXP pathway; isopentenyl diphosphate from 1-deoxy-D-xylulose 5-phosphate: step 1/6. In terms of biological role, catalyzes the NADPH-dependent rearrangement and reduction of 1-deoxy-D-xylulose-5-phosphate (DXP) to 2-C-methyl-D-erythritol 4-phosphate (MEP). The protein is 1-deoxy-D-xylulose 5-phosphate reductoisomerase of Bordetella pertussis (strain Tohama I / ATCC BAA-589 / NCTC 13251).